Reading from the N-terminus, the 348-residue chain is Protein disulfide isomerase CRELD2 (348 aa).

An N-terminal signal peptide occupies residues M1 to V22. Positions C30 to C33 match the CXXC motif. Disulfide bonds link C30–C33, C139–C153, C147–C165, and C167–C176. One can recognise an EGF-like 1 domain in the interval D135–I177. An FU 1 repeat occupies H192–P239. N250 carries an N-linked (GlcNAc...) asparagine glycan. An FU 2 repeat occupies S252–V299. The short motif at C262–C265 is the CXXC element. 4 disulfides stabilise this stretch: C262-C265, C293-C307, C300-C316, and C318-C328. An EGF-like 2; calcium-binding domain is found at D289 to L329.

It belongs to the CRELD family. In terms of assembly, interacts with CHRNA4. Component of a complex containing at least CRELD2, MANF, MATN3 and PDIA4.

It is found in the endoplasmic reticulum. The catalysed reaction is Catalyzes the rearrangement of -S-S- bonds in proteins.. Protein disulfide isomerase. Might play a role in the unfolded protein response. May regulate transport of alpha4-beta2 neuronal acetylcholine receptor. In Cricetulus griseus (Chinese hamster), this protein is Protein disulfide isomerase CRELD2 (CRELD2).